A 192-amino-acid polypeptide reads, in one-letter code: Large ribosomal subunit protein uL5 (192 aa).

It belongs to the universal ribosomal protein uL5 family. In terms of assembly, part of the 50S ribosomal subunit; part of the 5S rRNA/L5/L18/L25 subcomplex. Contacts the 5S rRNA and the P site tRNA. Forms a bridge to the 30S subunit in the 70S ribosome.

Its function is as follows. This is one of the proteins that bind and probably mediate the attachment of the 5S RNA into the large ribosomal subunit, where it forms part of the central protuberance. In the 70S ribosome it contacts protein S13 of the 30S subunit (bridge B1b), connecting the 2 subunits; this bridge is implicated in subunit movement. Contacts the P site tRNA; the 5S rRNA and some of its associated proteins might help stabilize positioning of ribosome-bound tRNAs. This chain is Large ribosomal subunit protein uL5, found in Sphingopyxis alaskensis (strain DSM 13593 / LMG 18877 / RB2256) (Sphingomonas alaskensis).